Reading from the N-terminus, the 201-residue chain is Recombination protein RecR (201 aa).

The C4-type zinc finger occupies 60-75; that stretch reads CETCGNIDTRSPCTIC. In terms of domain architecture, Toprim spans 83-178; it reads SIIVVVADVA…KVTRLAHGVP (96 aa).

This sequence belongs to the RecR family.

Functionally, may play a role in DNA repair. It seems to be involved in an RecBC-independent recombinational process of DNA repair. It may act with RecF and RecO. The chain is Recombination protein RecR from Nitrobacter winogradskyi (strain ATCC 25391 / DSM 10237 / CIP 104748 / NCIMB 11846 / Nb-255).